The chain runs to 365 residues: MMDKNAPRGTRTGFTTGACSAAAARAATLGLVTGQVPDRIECLLPNGDLVTFSVLDGAVNGDTAHAMVIKDAGDDPDCTDKAHLTADVTLRRDLPGQVLLTGGFGVGTVTMPGLGLTVGGPAINPVPRRNITANVQAAAGELLDEAGFEVCISVPQGVEMARKTLNARLGILGGISILGTTGIVKPYSTAAYRASVVQGVQVAGTLGHGVVVLTTGGRTEKFVMAEMPHLPEPAFVQMGDFLRYAMSAAVKAGLKQVVIGGMVGKLTKIAQGETITHAGRAEVDTGLLADIAAGLGAAPEVCEAIRQNETARYAGERMDALGLGTAFHTALAQRVIQTLQARYPDKFDLKVLVCDFDGRKIAEAP.

It belongs to the CbiD family.

The catalysed reaction is Co-precorrin-5B + S-adenosyl-L-methionine = Co-precorrin-6A + S-adenosyl-L-homocysteine. It participates in cofactor biosynthesis; adenosylcobalamin biosynthesis; cob(II)yrinate a,c-diamide from sirohydrochlorin (anaerobic route): step 6/10. Its function is as follows. Catalyzes the methylation of C-1 in cobalt-precorrin-5B to form cobalt-precorrin-6A. The protein is Cobalt-precorrin-5B C(1)-methyltransferase of Polaromonas naphthalenivorans (strain CJ2).